The sequence spans 368 residues: Probable dual-specificity RNA methyltransferase RlmN (368 aa).

E100 functions as the Proton acceptor in the catalytic mechanism. Residues 106 to 344 (QYYGLSVCVT…CVVRQEHGTD (239 aa)) enclose the Radical SAM core domain. C113 and C349 form a disulfide bridge. [4Fe-4S] cluster contacts are provided by C120, C124, and C127. Residues 172–173 (GE), S204, 227–229 (SLH), and N305 each bind S-adenosyl-L-methionine. C349 functions as the S-methylcysteine intermediate in the catalytic mechanism.

This sequence belongs to the radical SAM superfamily. RlmN family. The cofactor is [4Fe-4S] cluster.

It localises to the cytoplasm. It catalyses the reaction adenosine(2503) in 23S rRNA + 2 reduced [2Fe-2S]-[ferredoxin] + 2 S-adenosyl-L-methionine = 2-methyladenosine(2503) in 23S rRNA + 5'-deoxyadenosine + L-methionine + 2 oxidized [2Fe-2S]-[ferredoxin] + S-adenosyl-L-homocysteine. It carries out the reaction adenosine(37) in tRNA + 2 reduced [2Fe-2S]-[ferredoxin] + 2 S-adenosyl-L-methionine = 2-methyladenosine(37) in tRNA + 5'-deoxyadenosine + L-methionine + 2 oxidized [2Fe-2S]-[ferredoxin] + S-adenosyl-L-homocysteine. Its function is as follows. Specifically methylates position 2 of adenine 2503 in 23S rRNA and position 2 of adenine 37 in tRNAs. This chain is Probable dual-specificity RNA methyltransferase RlmN, found in Streptococcus agalactiae serotype III (strain NEM316).